Reading from the N-terminus, the 238-residue chain is Uridylate kinase (238 aa).

12–15 contacts ATP; the sequence is KLSG. G54 contacts UMP. ATP-binding residues include G55 and R59. UMP-binding positions include D74 and 135 to 142; that span reads TGNPFFTT. ATP is bound by residues T162, Y168, and D171.

This sequence belongs to the UMP kinase family. In terms of assembly, homohexamer.

Its subcellular location is the cytoplasm. The catalysed reaction is UMP + ATP = UDP + ADP. It functions in the pathway pyrimidine metabolism; CTP biosynthesis via de novo pathway; UDP from UMP (UMPK route): step 1/1. Its activity is regulated as follows. Inhibited by UTP. In terms of biological role, catalyzes the reversible phosphorylation of UMP to UDP. This is Uridylate kinase from Azoarcus sp. (strain BH72).